The following is a 218-amino-acid chain: Structural protein V19 (218 aa).

The protein resides in the virion. The protein is Structural protein V19 of Sputnik virophage.